A 326-amino-acid chain; its full sequence is Transcription factor MYB16 (326 aa).

2 HTH myb-type domains span residues 9-61 (KLGL…TNYL) and 62-116 (RPDI…KKRL). 2 DNA-binding regions (H-T-H motif) span residues 37 to 61 (WRSL…TNYL) and 89 to 112 (WSAI…NTHL). Disordered regions lie at residues 197–217 (NWTT…STVS) and 280–299 (DRSF…GGDC). Over residues 208-217 (QLESPTSTVS) the composition is skewed to polar residues. Over residues 280 to 290 (DRSFSGDKNET) the composition is skewed to basic and acidic residues.

As to expression, expressed in trichomes, epidermis and mesophyll cells of young leaves, stems, petals, sepals, carpels and stamens.

It localises to the nucleus. Its function is as follows. Involved in the control of epidermal cell morphogenesis in petals. Promotes unidirectional cell expansion once outgrowth has been initiated. Coordinately with WIN1/SHN1, participates in the regulation of cuticle biosynthesis and wax accumulation in reproductive organs and trichomes. Functions in cuticle nanoridge formation in petals and stamens, and in morphogenesis of petal conical cells and trichomes. Functions as a major regulator of cuticle formation in vegetative organs by regulating the cuticle biosynthesis genes CYP86A8/LCR and CER1. The sequence is that of Transcription factor MYB16 from Arabidopsis thaliana (Mouse-ear cress).